Here is a 37-residue protein sequence, read N- to C-terminus: Palicourein (37 aa).

A cross-link (cyclopeptide (Gly-Asn)) is located at residues 1–37; sequence GDPTFCGETCRVIPVCTYSAALGCTCDDRSDGLCKRN. Disulfide bonds link Cys6–Cys24, Cys10–Cys26, and Cys16–Cys34.

It belongs to the cyclotide family. This is a cyclic peptide.

In terms of biological role, probably participates in a plant defense mechanism. Inhibits the cytopathic effects of the human immunodeficiency virus. This Palicourea condensata (Cappel) protein is Palicourein.